Consider the following 315-residue polypeptide: Ribosomal RNA small subunit methyltransferase H (315 aa).

Residues 36–38 (GGH), Asp-56, Phe-81, Asp-103, and Gln-110 each bind S-adenosyl-L-methionine.

It belongs to the methyltransferase superfamily. RsmH family.

The protein resides in the cytoplasm. It carries out the reaction cytidine(1402) in 16S rRNA + S-adenosyl-L-methionine = N(4)-methylcytidine(1402) in 16S rRNA + S-adenosyl-L-homocysteine + H(+). Functionally, specifically methylates the N4 position of cytidine in position 1402 (C1402) of 16S rRNA. This is Ribosomal RNA small subunit methyltransferase H from Idiomarina loihiensis (strain ATCC BAA-735 / DSM 15497 / L2-TR).